Here is a 962-residue protein sequence, read N- to C-terminus: Translation initiation factor IF-2 (962 aa).

The disordered stretch occupies residues 101-366 (AAQTQAAPVR…KKGKKLKLEP (266 aa)). The segment covering 117–141 (DAAKARAEAATRAEARAKAEAEAAK) has biased composition (basic and acidic residues). The segment covering 145–157 (AKAGNKAKPAAQK) has biased composition (low complexity). A compositionally biased stretch (basic and acidic residues) spans 173–216 (KPAEESKAEKAQADKMPSKKPAEPKEKAAKPKHERNGKGKDAKK). The segment covering 219 to 234 (KPAAPAVPQPVVSAEE) has biased composition (low complexity). Residues 235-269 (QAQRDEEARRAAALRAHQEALLKEKQERQARREAM) are compositionally biased toward basic and acidic residues. The span at 270-283 (KQQAEQQAKAAQEA) shows a compositional bias: low complexity. The span at 338 to 354 (GGRDRNNARNGDDERVR) shows a compositional bias: basic and acidic residues. In terms of domain architecture, tr-type G spans 462–631 (PRPPVVTVMG…LLEAEVLELT (170 aa)). Positions 471 to 478 (GHVDHGKT) are G1. 471–478 (GHVDHGKT) contributes to the GTP binding site. Positions 496-500 (GITQH) are G2. The G3 stretch occupies residues 517-520 (DTPG). GTP is bound by residues 517–521 (DTPGH) and 571–574 (NKID). A G4 region spans residues 571 to 574 (NKID). The tract at residues 607-609 (SAK) is G5.

It belongs to the TRAFAC class translation factor GTPase superfamily. Classic translation factor GTPase family. IF-2 subfamily.

The protein localises to the cytoplasm. Its function is as follows. One of the essential components for the initiation of protein synthesis. Protects formylmethionyl-tRNA from spontaneous hydrolysis and promotes its binding to the 30S ribosomal subunits. Also involved in the hydrolysis of GTP during the formation of the 70S ribosomal complex. The chain is Translation initiation factor IF-2 from Neisseria meningitidis serogroup A / serotype 4A (strain DSM 15465 / Z2491).